Consider the following 184-residue polypeptide: Protein GrpE (184 aa).

Positions 1 to 24 (MADEQLDEKNLNSEEAGAVNGDAR) are disordered.

Belongs to the GrpE family. Homodimer.

The protein localises to the cytoplasm. Functionally, participates actively in the response to hyperosmotic and heat shock by preventing the aggregation of stress-denatured proteins, in association with DnaK and GrpE. It is the nucleotide exchange factor for DnaK and may function as a thermosensor. Unfolded proteins bind initially to DnaJ; upon interaction with the DnaJ-bound protein, DnaK hydrolyzes its bound ATP, resulting in the formation of a stable complex. GrpE releases ADP from DnaK; ATP binding to DnaK triggers the release of the substrate protein, thus completing the reaction cycle. Several rounds of ATP-dependent interactions between DnaJ, DnaK and GrpE are required for fully efficient folding. This chain is Protein GrpE, found in Pseudomonas entomophila (strain L48).